Consider the following 398-residue polypeptide: Cell division protein FtsZ (398 aa).

Residues 21-25 (GGGGN), 108-110 (GTG), glutamate 139, arginine 143, and aspartate 187 each bind GTP.

Belongs to the FtsZ family. As to quaternary structure, homodimer. Polymerizes to form a dynamic ring structure in a strictly GTP-dependent manner. Interacts directly with several other division proteins.

It is found in the cytoplasm. Functionally, essential cell division protein that forms a contractile ring structure (Z ring) at the future cell division site. The regulation of the ring assembly controls the timing and the location of cell division. One of the functions of the FtsZ ring is to recruit other cell division proteins to the septum to produce a new cell wall between the dividing cells. Binds GTP and shows GTPase activity. The polypeptide is Cell division protein FtsZ (Pseudomonas putida (strain ATCC 47054 / DSM 6125 / CFBP 8728 / NCIMB 11950 / KT2440)).